The sequence spans 556 residues: Urocanate hydratase (556 aa).

NAD(+) is bound by residues 53–54, Q131, 177–179, E197, 243–244, 264–268, 274–275, and Y323; these read GG, GMG, NA, QTSAH, and YL. C411 is a catalytic residue. G493 lines the NAD(+) pocket.

Belongs to the urocanase family. The cofactor is NAD(+).

Its subcellular location is the cytoplasm. The catalysed reaction is 4-imidazolone-5-propanoate = trans-urocanate + H2O. It participates in amino-acid degradation; L-histidine degradation into L-glutamate; N-formimidoyl-L-glutamate from L-histidine: step 2/3. Catalyzes the conversion of urocanate to 4-imidazolone-5-propionate. This is Urocanate hydratase from Pseudomonas fluorescens (strain SBW25).